A 150-amino-acid chain; its full sequence is Transcriptional regulator MraZ (150 aa).

SpoVT-AbrB domains are found at residues Thr-11–Glu-53 and Ala-82–Thr-125.

Belongs to the MraZ family. As to quaternary structure, forms oligomers.

Its subcellular location is the cytoplasm. The protein resides in the nucleoid. This Bifidobacterium longum (strain NCC 2705) protein is Transcriptional regulator MraZ.